Consider the following 362-residue polypeptide: Ciliary neurotrophic factor receptor subunit alpha (362 aa).

The N-terminal stretch at 1–19 (MANPVPSACCVVLAAVVVV) is a signal peptide. Residues 23–103 (RHSQQDSHIQ…HLKYQTYLRV (81 aa)) enclose the Ig-like C2-type domain. Cysteine 44 and cysteine 87 are disulfide-bonded. Asparagine 58, asparagine 68, asparagine 140, and asparagine 188 each carry an N-linked (GlcNAc...) asparagine glycan. 2 Fibronectin type-III domains span residues 106–203 (PPKE…VKPD) and 204–304 (PPES…TEEP). The short motif at 288 to 292 (WSDWS) is the WSXWS motif element. A lipid anchor (GPI-anchor amidated aspartate) is attached at aspartate 334. A propeptide spans 335–362 (KGAGVGSGAVAVCWTAGLVLAAYGVLFI) (removed in mature form).

Belongs to the type I cytokine receptor family. Type 3 subfamily. In terms of assembly, heterotrimer of the alpha subunit, LIFR and IL6ST. In terms of tissue distribution, highly expressed in nervous system. Also found in skeletal muscle.

It is found in the cell membrane. Binds to CNTF (GPA). The alpha subunit provides the receptor specificity. The sequence is that of Ciliary neurotrophic factor receptor subunit alpha (CNTFR) from Gallus gallus (Chicken).